We begin with the raw amino-acid sequence, 168 residues long: Urease accessory protein UreE (168 aa).

The segment at 145–168 (EGGAYAAGQGGGHGPHGQHTHPHH) is disordered.

Belongs to the UreE family.

The protein localises to the cytoplasm. Involved in urease metallocenter assembly. Binds nickel. Probably functions as a nickel donor during metallocenter assembly. The chain is Urease accessory protein UreE from Verminephrobacter eiseniae (strain EF01-2).